The primary structure comprises 195 residues: Keratin-associated protein 4-11 (195 aa).

Tandem repeats lie at residues 5 to 9, 24 to 28, 29 to 33, 34 to 38, 44 to 48, 49 to 53, 54 to 58, 59 to 63, 64 to 68, 69 to 73, 74 to 78, 79 to 83, 84 to 88, 89 to 93, 94 to 98, 99 to 103, 104 to 108, 109 to 113, 114 to 118, 119 to 123, 124 to 128, 129 to 133, 134 to 138, 144 to 148, 149 to 153, 154 to 158, and 159 to 163. The tract at residues 5-163 is 27 X 5 AA repeats of C-C-[GIKRQVHEL]-[SPTR]-[STVQRMC]; it reads CCGSVCSHQG…CCRPCCCLRP (159 aa).

It belongs to the KRTAP type 4 family. As to quaternary structure, interacts with hair keratins. Expressed in the hair follicles.

In the hair cortex, hair keratin intermediate filaments are embedded in an interfilamentous matrix, consisting of hair keratin-associated proteins (KRTAP), which are essential for the formation of a rigid and resistant hair shaft through their extensive disulfide bond cross-linking with abundant cysteine residues of hair keratins. The matrix proteins include the high-sulfur and high-glycine-tyrosine keratins. This Homo sapiens (Human) protein is Keratin-associated protein 4-11 (KRTAP4-11).